Reading from the N-terminus, the 741-residue chain is uncharacterized protein (741 aa).

A run of 5 helical transmembrane segments spans residues 34–54 (WLLW…LLII), 76–96 (LIIP…FING), 120–140 (LAVL…FVSL), 156–176 (LSVF…LIII), and 187–207 (LLLL…AFSI). A compositionally biased stretch (basic and acidic residues) spans 404 to 423 (EAEEKERQEKEEKEKAEKDN). Disordered regions lie at residues 404–473 (EAEE…FRPR) and 555–647 (QKEL…ENAK). A compositionally biased stretch (polar residues) spans 424–439 (GNGQDSNKVNSVSTEP). 2 stretches are compositionally biased toward basic and acidic residues: residues 445 to 465 (SDAD…DSSK) and 555 to 573 (QKEL…DQKS). Over residues 623–643 (DNTDESEDKQSEEEEKFDEEI) the composition is skewed to acidic residues. Helical transmembrane passes span 655–675 (AFFN…ENGA) and 715–735 (VIIA…FFAY).

This sequence to M.pneumoniae MPN_333.

It localises to the cell membrane. This is an uncharacterized protein from Mycoplasma pneumoniae (strain ATCC 29342 / M129 / Subtype 1) (Mycoplasmoides pneumoniae).